A 270-amino-acid chain; its full sequence is Type III pantothenate kinase (270 aa).

11-18 (DAGNSRIK) provides a ligand contact to ATP. Residues Y96 and 103–106 (GSDR) contribute to the substrate site. Residue D105 is the Proton acceptor of the active site. T129 is an ATP binding site. T195 serves as a coordination point for substrate.

The protein belongs to the type III pantothenate kinase family. Homodimer. It depends on NH4(+) as a cofactor. The cofactor is K(+).

Its subcellular location is the cytoplasm. The enzyme catalyses (R)-pantothenate + ATP = (R)-4'-phosphopantothenate + ADP + H(+). The protein operates within cofactor biosynthesis; coenzyme A biosynthesis; CoA from (R)-pantothenate: step 1/5. Its function is as follows. Catalyzes the phosphorylation of pantothenate (Pan), the first step in CoA biosynthesis. This Paraburkholderia xenovorans (strain LB400) protein is Type III pantothenate kinase.